The chain runs to 293 residues: Bifunctional protein FolD (293 aa).

Residues 164–166 (GRS), Ser193, and Thr234 contribute to the NADP(+) site.

The protein belongs to the tetrahydrofolate dehydrogenase/cyclohydrolase family. As to quaternary structure, homodimer.

It carries out the reaction (6R)-5,10-methylene-5,6,7,8-tetrahydrofolate + NADP(+) = (6R)-5,10-methenyltetrahydrofolate + NADPH. The catalysed reaction is (6R)-5,10-methenyltetrahydrofolate + H2O = (6R)-10-formyltetrahydrofolate + H(+). Its pathway is one-carbon metabolism; tetrahydrofolate interconversion. Catalyzes the oxidation of 5,10-methylenetetrahydrofolate to 5,10-methenyltetrahydrofolate and then the hydrolysis of 5,10-methenyltetrahydrofolate to 10-formyltetrahydrofolate. The chain is Bifunctional protein FolD from Bacteroides fragilis (strain ATCC 25285 / DSM 2151 / CCUG 4856 / JCM 11019 / LMG 10263 / NCTC 9343 / Onslow / VPI 2553 / EN-2).